The chain runs to 301 residues: tRNA dimethylallyltransferase (301 aa).

9–16 (GPTASGKS) is a binding site for ATP. Position 11 to 16 (11 to 16 (TASGKS)) interacts with substrate. The interval 34-37 (DSMQ) is interaction with substrate tRNA.

This sequence belongs to the IPP transferase family. Monomer. It depends on Mg(2+) as a cofactor.

The enzyme catalyses adenosine(37) in tRNA + dimethylallyl diphosphate = N(6)-dimethylallyladenosine(37) in tRNA + diphosphate. Its function is as follows. Catalyzes the transfer of a dimethylallyl group onto the adenine at position 37 in tRNAs that read codons beginning with uridine, leading to the formation of N6-(dimethylallyl)adenosine (i(6)A). The sequence is that of tRNA dimethylallyltransferase from Corynebacterium efficiens (strain DSM 44549 / YS-314 / AJ 12310 / JCM 11189 / NBRC 100395).